A 417-amino-acid polypeptide reads, in one-letter code: Serine hydroxymethyltransferase (417 aa).

K54 carries the post-translational modification N6-acetyllysine. (6S)-5,6,7,8-tetrahydrofolate is bound by residues L121 and 125–127 (GHL). K229 is subject to N6-(pyridoxal phosphate)lysine. N6-acetyllysine occurs at positions 250, 285, and 354. Residue 355–357 (SPF) coordinates (6S)-5,6,7,8-tetrahydrofolate. At K375 the chain carries N6-acetyllysine.

The protein belongs to the SHMT family. Homodimer. It depends on pyridoxal 5'-phosphate as a cofactor.

It is found in the cytoplasm. The catalysed reaction is (6R)-5,10-methylene-5,6,7,8-tetrahydrofolate + glycine + H2O = (6S)-5,6,7,8-tetrahydrofolate + L-serine. It functions in the pathway one-carbon metabolism; tetrahydrofolate interconversion. The protein operates within amino-acid biosynthesis; glycine biosynthesis; glycine from L-serine: step 1/1. Its function is as follows. Catalyzes the reversible interconversion of serine and glycine with tetrahydrofolate (THF) serving as the one-carbon carrier. This reaction serves as the major source of one-carbon groups required for the biosynthesis of purines, thymidylate, methionine, and other important biomolecules. Also exhibits THF-independent aldolase activity toward beta-hydroxyamino acids, producing glycine and aldehydes, via a retro-aldol mechanism. This Shigella dysenteriae serotype 1 (strain Sd197) protein is Serine hydroxymethyltransferase.